We begin with the raw amino-acid sequence, 141 residues long: NADPH-dependent 7-cyano-7-deazaguanine reductase (141 aa).

Cys-56 acts as the Thioimide intermediate in catalysis. Residue Asp-63 is the Proton donor of the active site. Residues 78-80 (VEL) and 97-98 (HE) contribute to the substrate site.

Belongs to the GTP cyclohydrolase I family. QueF type 1 subfamily.

Its subcellular location is the cytoplasm. It catalyses the reaction 7-aminomethyl-7-carbaguanine + 2 NADP(+) = 7-cyano-7-deazaguanine + 2 NADPH + 3 H(+). The protein operates within tRNA modification; tRNA-queuosine biosynthesis. Its function is as follows. Catalyzes the NADPH-dependent reduction of 7-cyano-7-deazaguanine (preQ0) to 7-aminomethyl-7-deazaguanine (preQ1). This Trichodesmium erythraeum (strain IMS101) protein is NADPH-dependent 7-cyano-7-deazaguanine reductase.